The following is a 244-amino-acid chain: Probable transcriptional regulatory protein CBU_1566 (244 aa).

Belongs to the TACO1 family.

It is found in the cytoplasm. This chain is Probable transcriptional regulatory protein CBU_1566, found in Coxiella burnetii (strain RSA 493 / Nine Mile phase I).